A 414-amino-acid chain; its full sequence is CinA-like protein (414 aa).

Belongs to the CinA family.

The polypeptide is CinA-like protein (Akkermansia muciniphila (strain ATCC BAA-835 / DSM 22959 / JCM 33894 / BCRC 81048 / CCUG 64013 / CIP 107961 / Muc)).